The primary structure comprises 558 residues: Glucose-6-phosphate isomerase (558 aa).

The active-site Proton donor is Glu-362. Active-site residues include His-393 and Lys-523.

The protein belongs to the GPI family.

The protein resides in the cytoplasm. The enzyme catalyses alpha-D-glucose 6-phosphate = beta-D-fructose 6-phosphate. Its pathway is carbohydrate degradation; glycolysis; D-glyceraldehyde 3-phosphate and glycerone phosphate from D-glucose: step 2/4. In Drosophila simulans (Fruit fly), this protein is Glucose-6-phosphate isomerase (Pgi).